A 249-amino-acid chain; its full sequence is Dihydroneopterin 2',3'-cyclic phosphate phosphodiesterase (249 aa).

One can recognise an HD domain in the interval 58 to 172 (LIEHTISVTK…VHYADEADSK (115 aa)).

As to quaternary structure, homododecamer. Requires Fe(2+) as cofactor. The cofactor is Zn(2+).

It catalyses the reaction 7,8-dihydroneopterin 2',3'-cyclic phosphate + H2O = 7,8-dihydroneopterin 3'-phosphate + H(+). It carries out the reaction 7,8-dihydroneopterin 2',3'-cyclic phosphate + H2O = 7,8-dihydroneopterin 2'-phosphate + H(+). It functions in the pathway cofactor biosynthesis; 5,6,7,8-tetrahydromethanopterin biosynthesis. Cyclic phosphodiesterase that hydrolyzes the cyclic phosphate of 7,8-dihydroneopterin 2',3'-cyclic phosphate (H2N-cP) and converts it to a mixture of 7,8-dihydroneopterin 2'-phosphate (H2N-2'P) and 7,8-dihydroneopterin 3'-phosphate (H2N-3'P). Is also able to utilize other phosphodiesters as substrates in vitro: hydrolysis of bis-pNPP and pNPPC produces nitrophenyl phosphate, and that of 2',3'-cAMP produces 3'-AMP. ATP, 3',5'-cAMP, GTP, 3',5'-cGMP, and 4',5'-cFMN cannot serve as substrates. This Methanocaldococcus jannaschii (strain ATCC 43067 / DSM 2661 / JAL-1 / JCM 10045 / NBRC 100440) (Methanococcus jannaschii) protein is Dihydroneopterin 2',3'-cyclic phosphate phosphodiesterase (mptB).